The following is a 186-amino-acid chain: Putative 3-methyladenine DNA glycosylase (186 aa).

Belongs to the DNA glycosylase MPG family.

This Borreliella afzelii (strain PKo) (Borrelia afzelii) protein is Putative 3-methyladenine DNA glycosylase.